A 1464-amino-acid chain; its full sequence is Sister chromatid cohesion protein PDS5 homolog B-B (1464 aa).

One copy of the HEAT repeat lies at Leu-383–Tyr-419. The tract at residues Lys-1126–Leu-1464 is disordered. A compositionally biased stretch (polar residues) spans Pro-1137–Val-1155. The segment covering Ser-1156 to Gly-1168 has biased composition (low complexity). Positions Thr-1177–Asp-1186 are enriched in acidic residues. 3 stretches are compositionally biased toward basic and acidic residues: residues Lys-1197–Pro-1215, Glu-1234–Ser-1244, and Trp-1265–Leu-1274. The segment covering Lys-1286 to Lys-1295 has biased composition (basic residues). The segment at residues Lys-1287–Met-1299 is a DNA-binding region (a.T hook 1). The span at Pro-1325–Asn-1342 shows a compositional bias: acidic residues. Residues Arg-1347 to Pro-1357 are compositionally biased toward basic residues. Over residues Lys-1359–Thr-1373 the composition is skewed to polar residues. DNA-binding regions (a.T hook) lie at residues Gln-1375–Val-1387 and Lys-1391–Lys-1403. The segment covering Lys-1390 to Val-1400 has biased composition (basic residues). A compositionally biased stretch (acidic residues) spans Ser-1425–Val-1435. Basic residues predominate over residues Gly-1441–Gln-1453. Residues Met-1455–Leu-1464 are compositionally biased toward basic and acidic residues.

It belongs to the PDS5 family. In terms of assembly, interacts with the cohesin complex. In terms of processing, phosphorylated in mitotic cells.

It localises to the nucleus. Functionally, plays a role in androgen-induced proliferative arrest. Required for maintenance of sister chromatid cohesion during mitosis. This chain is Sister chromatid cohesion protein PDS5 homolog B-B (pds5b-b), found in Xenopus laevis (African clawed frog).